The chain runs to 304 residues: Ribonuclease Z (304 aa).

The Zn(2+) site is built by His63, His65, Asp67, His68, His143, Asp213, and His271. Catalysis depends on Asp67, which acts as the Proton acceptor.

Belongs to the RNase Z family. Homodimer. It depends on Zn(2+) as a cofactor.

It catalyses the reaction Endonucleolytic cleavage of RNA, removing extra 3' nucleotides from tRNA precursor, generating 3' termini of tRNAs. A 3'-hydroxy group is left at the tRNA terminus and a 5'-phosphoryl group is left at the trailer molecule.. Its function is as follows. Zinc phosphodiesterase, which displays some tRNA 3'-processing endonuclease activity. Probably involved in tRNA maturation, by removing a 3'-trailer from precursor tRNA. The sequence is that of Ribonuclease Z from Porphyromonas gingivalis (strain ATCC 33277 / DSM 20709 / CIP 103683 / JCM 12257 / NCTC 11834 / 2561).